A 296-amino-acid chain; its full sequence is Decaprenyl diphosphate synthase (296 aa).

Positions 1 to 24 are disordered; that stretch reads MARDARKRTSSNFPQLPPAPDDYP. Residue Asp76 is part of the active site. Asp76 serves as a coordination point for Mg(2+). Substrate-binding positions include 76-80, Trp81, Arg89, His93, 121-124, Trp125, Arg127, Arg168, Arg244, and 250-252; these read DGNGR, STEN, and RSS. The Proton acceptor role is filled by Asn124. Glu263 contacts Mg(2+). 292-294 provides a ligand contact to substrate; that stretch reads RFG.

The protein belongs to the UPP synthase family. In terms of assembly, homodimer. Mg(2+) is required as a cofactor. Requires Mn(2+) as cofactor.

It localises to the cell membrane. It catalyses the reaction (2Z,6E)-farnesyl diphosphate + 7 isopentenyl diphosphate = (2Z,6Z,10Z,14Z,18Z,22Z,26Z,30Z,34E)-decaprenyl diphosphate + 7 diphosphate. It carries out the reaction n isopentenyl diphosphate + (2E,6E)-farnesyl diphosphate = a di-trans,poly-cis-polyprenyl diphosphate + n diphosphate. Activated by dithiothreitol and inhibited by EDTA. Catalyzes the sequential condensation of isopentenyl diphosphate (IPP) in the cis configuration with (2Z,6E)-farnesyl diphosphate (Z-FPP or EZ-FPP) generating the 50 carbon product trans,polycis-decaprenyl diphosphate. When (2E,6E)-farnesyl diphosphate (E-FPP or EE-FPP) is used in vitro, both primary products decaprenyl diphosphate and (2E,6E,10E)-geranylgeranyl diphosphate (EEE-GGPP) are synthesized. M.tuberculosis does not synthesize (2E,6E,10Z)-geranylgeranyl diphosphate (EEZ-GGPP) and heptaprenyl diphosphate. Can also accept many different allylic substrates, including E-geranyl diphosphate (E-GPP), neryl diphosphate (NPP), and all-trans-geranyl-geranyl diphosphate. This chain is Decaprenyl diphosphate synthase (uppS), found in Mycobacterium tuberculosis (strain ATCC 25618 / H37Rv).